The sequence spans 457 residues: uncharacterized protein (457 aa).

The TRAM domain occupies 5–63; that stretch reads PVKKNDVIEVEIIDLTHEGLGVAKVDHYPLFIENALPGEKLEIKVLKTGKSFGYGKVLT. S-adenosyl-L-methionine-binding residues include Q287, Y316, E337, and D385. C412 functions as the Nucleophile in the catalytic mechanism.

The protein belongs to the class I-like SAM-binding methyltransferase superfamily. RNA M5U methyltransferase family.

This is an uncharacterized protein from Enterococcus faecalis (strain ATCC 700802 / V583).